A 640-amino-acid chain; its full sequence is Endoglucanase 2 (640 aa).

An N-terminal signal peptide occupies residues 1–34 (MARGGGAAGVSMAHHLGIALVVLVFAAMAQVARG). Catalysis depends on Asp-93, which acts as the Nucleophile. Catalysis depends on residues His-428, Asp-480, and Glu-489. A propeptide spans 512–640 (RARGRLGQSL…DVWVTGYKLV (129 aa)) (removed in mature form). N-linked (GlcNAc...) asparagine glycosylation occurs at Asn-528.

Belongs to the glycosyl hydrolase 9 (cellulase E) family. In terms of tissue distribution, expressed in roots and flowers.

The protein localises to the secreted. The enzyme catalyses Endohydrolysis of (1-&gt;4)-beta-D-glucosidic linkages in cellulose, lichenin and cereal beta-D-glucans.. Hydrolyzes 1,4-beta-glycosyl linkages of 1,4-beta-glucans and 1,3-1,4-beta-glucans. Possesses broad substrate specificity for hemicelluloses of type II cell walls. Substrate preference is carboxymethyl-cellulose &gt; 1,3-1,4-beta-glucan &gt; lichenan &gt; arabinoxylan &gt; phospho-swollen cellulose &gt; xylan &gt; glucomannan. May participate in lateral root development. This is Endoglucanase 2 (GLU5) from Oryza sativa subsp. japonica (Rice).